Consider the following 932-residue polypeptide: RNA-binding protein 12 (932 aa).

The segment at 96–116 is disordered; the sequence is DIPPANASRSGPPPSSGMSSR. Low complexity predominate over residues 98-116; the sequence is PPANASRSGPPPSSGMSSR. An RRM 1 domain is found at 304 to 379; the sequence is LYVSVHGMPF…RYVEVSPATE (76 aa). Serine 352 and serine 375 each carry phosphoserine. Composition is skewed to polar residues over residues 392 to 401 and 408 to 417; these read KQNMGPSGQT and LPRSKSPSGQ. A disordered region spans residues 392 to 424; the sequence is KQNMGPSGQTHPPPQTLPRSKSPSGQKRSRSRS. Serine 420, serine 422, and serine 424 each carry phosphoserine. The region spanning 430–507 is the RRM 2 domain; it reads FCVYLKGLPF…RFIQVHPITK (78 aa). Serine 525 is modified (phosphoserine). Residues 717-734 show a composition bias toward low complexity; it reads NGPPFNFPGNFGGSNAFG. Residues 717–853 form a disordered region; the sequence is NGPPFNFPGN…PGFASSSGKP (137 aa). Gly residues predominate over residues 783-811; the sequence is SGFGGGPQNFGNGPGSLGGPPGFGSGPPG. The segment covering 824–836 has biased composition (pro residues); sequence AFGPGPGPGPGPG. The RRM 3 domain occupies 856–932; that stretch reads TVIKVQNMPF…GSRKVKLVLG (77 aa).

The protein resides in the nucleus. The sequence is that of RNA-binding protein 12 (RBM12) from Homo sapiens (Human).